The sequence spans 155 residues: 6,7-dimethyl-8-ribityllumazine synthase (155 aa).

5-amino-6-(D-ribitylamino)uracil-binding positions include Phe-24, 58 to 60 (AFE), and 82 to 84 (VII). Position 87 to 88 (87 to 88 (ST)) interacts with (2S)-2-hydroxy-3-oxobutyl phosphate. His-90 functions as the Proton donor in the catalytic mechanism. Phe-115 contributes to the 5-amino-6-(D-ribitylamino)uracil binding site. Arg-129 is a (2S)-2-hydroxy-3-oxobutyl phosphate binding site.

The protein belongs to the DMRL synthase family.

It catalyses the reaction (2S)-2-hydroxy-3-oxobutyl phosphate + 5-amino-6-(D-ribitylamino)uracil = 6,7-dimethyl-8-(1-D-ribityl)lumazine + phosphate + 2 H2O + H(+). It participates in cofactor biosynthesis; riboflavin biosynthesis; riboflavin from 2-hydroxy-3-oxobutyl phosphate and 5-amino-6-(D-ribitylamino)uracil: step 1/2. Its function is as follows. Catalyzes the formation of 6,7-dimethyl-8-ribityllumazine by condensation of 5-amino-6-(D-ribitylamino)uracil with 3,4-dihydroxy-2-butanone 4-phosphate. This is the penultimate step in the biosynthesis of riboflavin. The polypeptide is 6,7-dimethyl-8-ribityllumazine synthase (Pelodictyon phaeoclathratiforme (strain DSM 5477 / BU-1)).